The chain runs to 473 residues: UDP-N-acetylmuramate--L-alanine ligase (473 aa).

114–120 (GTHGKTT) contacts ATP.

It belongs to the MurCDEF family.

It localises to the cytoplasm. The enzyme catalyses UDP-N-acetyl-alpha-D-muramate + L-alanine + ATP = UDP-N-acetyl-alpha-D-muramoyl-L-alanine + ADP + phosphate + H(+). The protein operates within cell wall biogenesis; peptidoglycan biosynthesis. In terms of biological role, cell wall formation. This is UDP-N-acetylmuramate--L-alanine ligase from Chlorobium luteolum (strain DSM 273 / BCRC 81028 / 2530) (Pelodictyon luteolum).